Consider the following 122-residue polypeptide: Large ribosomal subunit protein uL14 (122 aa).

Belongs to the universal ribosomal protein uL14 family. In terms of assembly, part of the 50S ribosomal subunit. Forms a cluster with proteins L3 and L19. In the 70S ribosome, L14 and L19 interact and together make contacts with the 16S rRNA in bridges B5 and B8.

Functionally, binds to 23S rRNA. Forms part of two intersubunit bridges in the 70S ribosome. This Nitratidesulfovibrio vulgaris (strain ATCC 29579 / DSM 644 / CCUG 34227 / NCIMB 8303 / VKM B-1760 / Hildenborough) (Desulfovibrio vulgaris) protein is Large ribosomal subunit protein uL14.